Reading from the N-terminus, the 435-residue chain is Tryptophan--tRNA ligase (435 aa).

Residues 10–12 (TTS) and 18–19 (GN) contribute to the ATP site. The 'HIGH' region signature appears at 11-19 (TSGTPHLGN). Position 143 (D143) interacts with L-tryptophan. ATP-binding positions include 155 to 157 (GRD), L195, and 202 to 206 (KMSKS). The 'KMSKS' region motif lies at 202–206 (KMSKS).

The protein belongs to the class-I aminoacyl-tRNA synthetase family. In terms of assembly, homodimer.

The protein localises to the cytoplasm. It carries out the reaction tRNA(Trp) + L-tryptophan + ATP = L-tryptophyl-tRNA(Trp) + AMP + diphosphate + H(+). Its function is as follows. Catalyzes the attachment of tryptophan to tRNA(Trp). In Xylella fastidiosa (strain Temecula1 / ATCC 700964), this protein is Tryptophan--tRNA ligase.